We begin with the raw amino-acid sequence, 361 residues long: Peptide chain release factor 1 (361 aa).

Gln235 bears the N5-methylglutamine mark.

It belongs to the prokaryotic/mitochondrial release factor family. In terms of processing, methylated by PrmC. Methylation increases the termination efficiency of RF1.

Its subcellular location is the cytoplasm. Functionally, peptide chain release factor 1 directs the termination of translation in response to the peptide chain termination codons UAG and UAA. The chain is Peptide chain release factor 1 from Azoarcus sp. (strain BH72).